We begin with the raw amino-acid sequence, 205 residues long: CASP-like protein 0U1 (205 aa).

The Cytoplasmic segment spans residues 1 to 66; it reads MSGGDIDPTA…GYHKFAVFQF (66 aa). Residues 10 to 162 form the MARVEL domain; sequence AINSPKFRLI…SMMFTWKEWR (153 aa). Residues 67–87 traverse the membrane as a helical segment; it reads LVVICVTYWLFTMLWMGMYLI. At 88–90 the chain is on the extracellular side; the sequence is QKV. The chain crosses the membrane as a helical span at residues 91-111; it reads PPAGTEFMIYAVFNVLILIAF. Over 112 to 137 the chain is Cytoplasmic; the sequence is STSWTECNETIVDPTYPVCKRATGAK. A helical transmembrane segment spans residues 138 to 158; it reads ASIAFAMFTWLALCVSMMFTW. Over 159-167 the chain is Extracellular; that stretch reads KEWRDQNYE. The helical transmembrane segment at 168-188 threads the bilayer; the sequence is GLPIFGDFSSFMPGGGGGGMG. The Cytoplasmic segment spans residues 189–205; the sequence is GGGGYERPSDVNTQTYA.

It belongs to the Casparian strip membrane proteins (CASP) family. As to quaternary structure, homodimer and heterodimers.

Its subcellular location is the cell membrane. The chain is CASP-like protein 0U1 from Micromonas pusilla (strain CCMP1545) (Picoplanktonic green alga).